Consider the following 117-residue polypeptide: Replication initiation control protein YabA (117 aa).

Positions 87, 89, 103, and 106 each coordinate Zn(2+).

Belongs to the YabA family. In terms of assembly, homotetramer. Interacts with both DnaA and DnaN, acting as a bridge between these two proteins. Zn(2+) is required as a cofactor.

The protein resides in the cytoplasm. It localises to the nucleoid. Functionally, involved in control of chromosome replication initiation. Inhibits the cooperative binding of DnaA to the oriC region, thus negatively regulating initiation of chromosome replication. Inhibits the ability of DnaA-ATP to form a helix on DNA; does not disassemble preformed DnaA-DNA helices. Decreases the residence time of DnaA on the chromosome at its binding sites (oriC, replication forks and promoter-binding sites). Tethers DnaA to the replication machinery via the DNA polymerase beta sliding clamp subunit (dnaN). Associates with oriC and other DnaA targets on the chromosome in a DnaA-dependent manner. The protein is Replication initiation control protein YabA of Latilactobacillus sakei subsp. sakei (strain 23K) (Lactobacillus sakei subsp. sakei).